The primary structure comprises 173 residues: Translation initiation factor IF-3 (173 aa).

The protein belongs to the IF-3 family. In terms of assembly, monomer.

Its subcellular location is the cytoplasm. In terms of biological role, IF-3 binds to the 30S ribosomal subunit and shifts the equilibrium between 70S ribosomes and their 50S and 30S subunits in favor of the free subunits, thus enhancing the availability of 30S subunits on which protein synthesis initiation begins. The sequence is that of Translation initiation factor IF-3 from Bartonella bacilliformis (strain ATCC 35685 / KC583 / Herrer 020/F12,63).